The following is a 346-amino-acid chain: Tyrosine--tRNA ligase (346 aa).

The 'HIGH' region motif lies at 47-56 (PSGRIHIAQA). The short motif at 230-234 (KMSKS) is the 'KMSKS' region element. ATP is bound at residue lysine 233.

The protein belongs to the class-I aminoacyl-tRNA synthetase family. Homodimer.

The catalysed reaction is tRNA(Tyr) + L-tyrosine + ATP = L-tyrosyl-tRNA(Tyr) + AMP + diphosphate + H(+). Catalyzes the attachment of tyrosine to tRNA(Tyr) in a two-step reaction: tyrosine is first activated by ATP to form Tyr-AMP and then transferred to the acceptor end of tRNA(Tyr). In Acanthamoeba polyphaga (Amoeba), this protein is Tyrosine--tRNA ligase (YARS).